The following is a 161-amino-acid chain: Large ribosomal subunit protein mL50 (161 aa).

Residues 27–51 are disordered; that stretch reads WGGHSKKEEKEVEENSIIPQEKKEP.

Belongs to the mitochondrion-specific ribosomal protein mL50 family. In terms of assembly, component of the mitochondrial ribosome large subunit (39S) which comprises a 16S rRNA and about 50 distinct proteins.

Its subcellular location is the mitochondrion. The sequence is that of Large ribosomal subunit protein mL50 (MRPL50) from Gallus gallus (Chicken).